Here is a 543-residue protein sequence, read N- to C-terminus: Vibriobactin-specific 2,3-dihydroxybenzoate-AMP ligase (543 aa).

A helical transmembrane segment spans residues 240–259 (FPLSSPGALGVFWAGGCVVL).

The protein belongs to the ATP-dependent AMP-binding enzyme family.

It is found in the cell inner membrane. It catalyses the reaction 2,3-dihydroxybenzoate + holo-[ACP] + ATP = 2,3-dihydroxybenzoyl-[ACP] + AMP + diphosphate. It participates in siderophore biosynthesis; vibriobactin biosynthesis. Functionally, activation of the carboxylate group of 2,3-dihydroxy-benzoate (DHB), via ATP-dependent PPi exchange reactions, to the acyladenylate, preparing that molecule for the final stages of vibriobactin synthesis. This Vibrio cholerae serotype O1 (strain ATCC 39315 / El Tor Inaba N16961) protein is Vibriobactin-specific 2,3-dihydroxybenzoate-AMP ligase (vibE).